Consider the following 539-residue polypeptide: GMP synthase [glutamine-hydrolyzing] (539 aa).

A Glutamine amidotransferase type-1 domain is found at 4-202; the sequence is KILILDFGSQ…VLQIAGAKPD (199 aa). The Nucleophile role is filled by cysteine 81. Catalysis depends on residues histidine 176 and glutamate 178. The GMPS ATP-PPase domain maps to 203 to 395; that stretch reads WIMSNHIEEA…LGLPPEMVYR (193 aa). 230-236 contributes to the ATP binding site; sequence SGGVDSS.

As to quaternary structure, homodimer.

It catalyses the reaction XMP + L-glutamine + ATP + H2O = GMP + L-glutamate + AMP + diphosphate + 2 H(+). It participates in purine metabolism; GMP biosynthesis; GMP from XMP (L-Gln route): step 1/1. Catalyzes the synthesis of GMP from XMP. The protein is GMP synthase [glutamine-hydrolyzing] of Burkholderia ambifaria (strain ATCC BAA-244 / DSM 16087 / CCUG 44356 / LMG 19182 / AMMD) (Burkholderia cepacia (strain AMMD)).